The following is a 144-amino-acid chain: Large ribosomal subunit protein uL16 (144 aa).

This sequence belongs to the universal ribosomal protein uL16 family. In terms of assembly, part of the 50S ribosomal subunit.

Binds 23S rRNA and is also seen to make contacts with the A and possibly P site tRNAs. The protein is Large ribosomal subunit protein uL16 of Novosphingobium aromaticivorans (strain ATCC 700278 / DSM 12444 / CCUG 56034 / CIP 105152 / NBRC 16084 / F199).